Here is a 135-residue protein sequence, read N- to C-terminus: Putative pre-16S rRNA nuclease (135 aa).

It belongs to the YqgF nuclease family.

The protein resides in the cytoplasm. Could be a nuclease involved in processing of the 5'-end of pre-16S rRNA. The polypeptide is Putative pre-16S rRNA nuclease (Maridesulfovibrio salexigens (strain ATCC 14822 / DSM 2638 / NCIMB 8403 / VKM B-1763) (Desulfovibrio salexigens)).